We begin with the raw amino-acid sequence, 307 residues long: Taste receptor type 2 member 10 (307 aa).

The Extracellular segment spans residues 1-6 (MLSVVE). Residues 7 to 27 (GILILVVISESVFGVLGNGFI) traverse the membrane as a helical segment. At 28 to 42 (GLVNCIDCAKNKLST) the chain is on the cytoplasmic side. Residues 43-63 (IGFILTGLAISRIFLIWIIIT) form a helical membrane-spanning segment. Over 64-100 (DGFIQIFSPDVYASGNLIEYISYFWVITNQSSIWFAT) the chain is Extracellular. The N-linked (GlcNAc...) asparagine glycan is linked to N92. A helical transmembrane segment spans residues 101-121 (SLSIFYFLKIANFSNYIFLWL). At 122-126 (KSRIN) the chain is on the cytoplasmic side. A helical membrane pass occupies residues 127 to 147 (RVLPLLMGFLLISCLLNFAYI). At 148–179 (VKILNDLKMKNDTVWRLNMYKSEYFIKQLLLN) the chain is on the extracellular side. N158 carries N-linked (GlcNAc...) asparagine glycosylation. Residues 180 to 200 (LGVIFFFTLSLITSVLLIISL) form a helical membrane-spanning segment. The Cytoplasmic segment spans residues 201 to 227 (WRHNRQMQSNVTGLRDSITEAHVKAMK). The helical transmembrane segment at 228–248 (VLISFIILFILYFIGIAIEIS) threads the bilayer. The Extracellular portion of the chain corresponds to 249 to 257 (YFTVPENKL). The chain crosses the membrane as a helical span at residues 258–278 (LLIFGMTTTAIYPWGHSFILI). At 279 to 307 (LGNSKLKQASLRVLQQLKCCEERKNLRAT) the chain is on the cytoplasmic side.

It belongs to the G-protein coupled receptor T2R family.

It localises to the membrane. Functionally, receptor that may play a role in the perception of bitterness and is gustducin-linked. May play a role in sensing the chemical composition of the gastrointestinal content. The activity of this receptor may stimulate alpha gustducin, mediate PLC-beta-2 activation and lead to the gating of TRPM5. The chain is Taste receptor type 2 member 10 (TAS2R10) from Papio hamadryas (Hamadryas baboon).